Reading from the N-terminus, the 640-residue chain is MPVITLPDGSQRSFDHAVSVADVAASIGAGLAKATVAGKVDGKLVDACDLISNDATLQIITPKDEEGLEIIRHSCAHLVGHAVKQLYPTAKMVIGPVIDEGFYYDIAYERPFTPEDMAAIEKRMMELIEKDYDVVKKMTPRAEVIDVFKARGEDYKLRLVEDMPDEQAMGLYYHEEYVDMCRGPHVPNTRFLKAFKLTKLSGAYWRGDAKNEQLQRVYGTAWADKKQLAAYIQRIEEAEKRDHRKIGKQLDLFHLQEEAPGMVFWHANGWTVYQVLEQYMRGVQRENGYQEIKTPQVVDRILWERSGHWSNYAENMFTTSSESRDYAVKPMNCPCHVQVFNQGLKSYRDLPLRLAEFGACHRNEPSGALHGIMRVRGFVQDDAHIFCTEEQVKKEAADFIKLTLDVYKDFGFSDIAMKLSTRPAKRVGSEELWDRAETALADALNESGLEWEYQPGEGAFYGPKIEFTLRDCLGRNWQCGTLQYDPNLPERLDASYIAEDNSRVRPVMLHRAILGSFERFIGMLIEHYAGVFPAWLAPTQAVIMNITDKQADFALEVEKSLNGSGFRAKSDLRNEKIGFKIREHTLLKVPYLLVIGDREVETQTVAVRTREGADLGSMPVAQFAELLTQAVSRRGRQESE.

The 61-residue stretch at 1–61 (MPVITLPDGS…SNDATLQIIT (61 aa)) folds into the TGS domain. The tract at residues 242–533 (DHRKIGKQLD…LIEHYAGVFP (292 aa)) is catalytic. Cys-333, His-384, and His-510 together coordinate Zn(2+).

It belongs to the class-II aminoacyl-tRNA synthetase family. As to quaternary structure, homodimer. Requires Zn(2+) as cofactor.

The protein localises to the cytoplasm. The catalysed reaction is tRNA(Thr) + L-threonine + ATP = L-threonyl-tRNA(Thr) + AMP + diphosphate + H(+). Functionally, catalyzes the attachment of threonine to tRNA(Thr) in a two-step reaction: L-threonine is first activated by ATP to form Thr-AMP and then transferred to the acceptor end of tRNA(Thr). Also edits incorrectly charged L-seryl-tRNA(Thr). This chain is Threonine--tRNA ligase, found in Pseudomonas putida (strain GB-1).